Here is a 430-residue protein sequence, read N- to C-terminus: Adenylosuccinate synthetase (430 aa).

GTP-binding positions include 11 to 17 (GDEGKGK) and 39 to 41 (GHS). Aspartate 12 serves as the catalytic Proton acceptor. Mg(2+) is bound by residues aspartate 12 and glycine 39. IMP contacts are provided by residues 12–15 (DEGK), 37–40 (NAGH), threonine 129, arginine 143, asparagine 221, threonine 236, and arginine 300. Histidine 40 (proton donor) is an active-site residue. A substrate-binding site is contributed by 296–302 (VSTGRKR). GTP contacts are provided by residues arginine 302, 328–330 (KLD), and 412–414 (GTG).

Belongs to the adenylosuccinate synthetase family. Homodimer. Mg(2+) serves as cofactor.

The protein localises to the cytoplasm. The catalysed reaction is IMP + L-aspartate + GTP = N(6)-(1,2-dicarboxyethyl)-AMP + GDP + phosphate + 2 H(+). Its pathway is purine metabolism; AMP biosynthesis via de novo pathway; AMP from IMP: step 1/2. Functionally, plays an important role in the de novo pathway and in the salvage pathway of purine nucleotide biosynthesis. Catalyzes the first committed step in the biosynthesis of AMP from IMP. The polypeptide is Adenylosuccinate synthetase (Sordaria macrospora (strain ATCC MYA-333 / DSM 997 / K(L3346) / K-hell)).